A 1673-amino-acid chain; its full sequence is NBPF family member NBPF26 (1673 aa).

4 EGF-like domains span residues 24 to 63 (HALQ…EYCQ), 64 to 102 (HRDP…EDCQ), 105 to 143 (TPHP…KECQ), and 144 to 180 (WTDA…QKCE). 17 disulfides stabilise this stretch: Cys28/Cys41, Cys35/Cys51, Cys53/Cys62, Cys68/Cys79, Cys73/Cys90, Cys92/Cys101, Cys109/Cys121, Cys115/Cys131, Cys133/Cys142, Cys148/Cys159, Cys153/Cys168, Cys170/Cys179, Cys186/Cys198, Cys192/Cys207, Cys209/Cys218, Cys225/Cys236, and Cys230/Cys246. Residues 182-219 (DVNECDIPGHCQHGGTCLNLPGSYQCQCLQGFTGQYCD) form the EGF-like 5; calcium-binding domain. The 38-residue stretch at 221-258 (LYVPCAHSPCVNGGTCRQTGDFTFECNCLPVPDSTSSA) folds into the EGF-like 6 domain. Positions 337-381 (RQFKEEKLAEQLKQAEELRQYKVLVHSQERELTQLKEKLREGRDA) form a coiled coil. Disordered stretches follow at residues 423 to 463 (KLSP…KVPE), 713 to 734 (EKVQ…EVPE), and 782 to 828 (WEDA…EGYS). Over residues 427–443 (ENDEDEDEDVQVEEDEK) the composition is skewed to acidic residues. 13 consecutive Olduvai domains span residues 427–521 (ENDE…NILP), 698–790 (ENDN…HIIP), 791–879 (ENES…ATGP), 882–937 (SREL…VDMD), 938–1029 (EIEK…PSCP), 1032–1104 (SGEL…PSCP), 1107–1162 (SREL…LDVD), 1163–1255 (RIKK…RSKK), 1256–1348 (ERRR…PSCP), 1351–1423 (SREL…PSCP), 1426–1481 (SREL…LDVD), 1482–1574 (RIKK…RSKK), and 1575–1673 (ERRR…IFPQ). The segment covering 452–463 (EVQKTEESKVPE) has biased composition (basic and acidic residues). Acidic residues-rich tracts occupy residues 792–801 (NESDDEEEEE) and 812–824 (ESEE…ESWD). Residues 1242 to 1280 (KGKGKKRRGRRSKKERRRGRKEGEEDQNPPCPRLSRELL) form a disordered region. Positions 1243-1261 (GKGKKRRGRRSKKERRRGR) are enriched in basic residues. A disordered region spans residues 1561–1594 (KGKGKKRRGRRSKKERRRGRKEGEEDQNPPCPRL). Positions 1562–1580 (GKGKKRRGRRSKKERRRGR) are enriched in basic residues.

It belongs to the NBPF family.

Its subcellular location is the cytoplasm. The polypeptide is NBPF family member NBPF26 (Homo sapiens (Human)).